The chain runs to 182 residues: Transcriptional repressor NrdR (182 aa).

The tract at residues 1-24 (MRCPYCGGLDTQVRDSRPTEDNTA) is disordered. A zinc finger spans residues 3-34 (CPYCGGLDTQVRDSRPTEDNTAIRRRRICPDC). The segment covering 12-24 (QVRDSRPTEDNTA) has biased composition (basic and acidic residues). One can recognise an ATP-cone domain in the interval 49–139 (LMVLKRSGRR…VYRNFREAKD (91 aa)). The tract at residues 146–182 (ELSQPELAQSDDVKAEGGAEGGRDKPKAAGKPPRSAE) is disordered. A compositionally biased stretch (basic and acidic residues) spans 156-172 (DDVKAEGGAEGGRDKPK).

This sequence belongs to the NrdR family. Zn(2+) is required as a cofactor.

Negatively regulates transcription of bacterial ribonucleotide reductase nrd genes and operons by binding to NrdR-boxes. The sequence is that of Transcriptional repressor NrdR from Xanthobacter autotrophicus (strain ATCC BAA-1158 / Py2).